The primary structure comprises 308 residues: MAKENLPIVFGPVLSRRFGKSLGVDLSPSKKQCNYNCIYCELGKAKPIERMEEVIKVETLISTIQNALNNLTTPIDVLTITANGEPTLYPHLLELIQSIKPFLKGVKTLILSNGSLFYEPKVQQALKEFDIVKFSLDAIDLKAFERVDKPYSKDINKILEGILSFSQIYQGQLVAEVLLIKGVNDSANNLKLIADFLKKINTARVDLSTIDRPSSFKAPKLSEDELLKCSLFFEGLCVSLPKRSTAQAKKLVSCGIDELLALISRRPLSAEEAPLILDPNAFKHLETLLNHKQITIKKVGSLEFYCAF.

A Radical SAM core domain is found at 18 to 247 (FGKSLGVDLS…VSLPKRSTAQ (230 aa)). [4Fe-4S] cluster contacts are provided by Cys-33, Cys-37, and Cys-40.

This sequence belongs to the UPF0026 family. The cofactor is [4Fe-4S] cluster.

This Helicobacter pylori (strain J99 / ATCC 700824) (Campylobacter pylori J99) protein is UPF0026 protein jhp_0109.